A 1073-amino-acid chain; its full sequence is MKTPLLALALWSLLLQLGLTFWPSSVSQNCHNGSYEISVLMMNNSAFPESLDNLKAVVNEGVNIVRQRLLEAGLTVTVNATFVYSEGVIYKSSDCRSSTCEGLDLLRTISSEKRMGCVLLGPSCTYSTFQMYLDTDLNYPMISAGSFGLSCDYKETLTRLMSPARKLMYFLVDFWKVNNFPFKPFSWNTAYVFKNSTESEDCFWYLNALEAGVSYFSQKLSFKEMLRGNEEFQNILMDQNRKSNVIIMCGAPETVHTLKGGRAVAEDTVIILVDLFNDHYFMDNVTAPDYMKNVLVLTLPPENSVSNSSFSKDLSLVKNDFTLAYMNGVLLFGHMLKIFLEKREDVTTSKFAHAFRNITFEGHMGPVTLDNCGDIDNTMFLLYTSVDTSKYKVLLTYDTRKNYTNPVDKSPTFIWKNHKLPNDIPGRGPQILMIAVFTLTGTIVLLLLIALLVLRKYKREYALRQKKWSHIPPENIFPLESNETNHVSLKIDDDRRRDTIQRLRQCKYDKKRVILKDLKHNDGNFTEKQKIELNKLLQIDYYNLTKFYGTVKLDSMIFGVIEYCERGSLREVLNDTISYPDGTFMDWEFKISVLYDIAKGMSYLHSSKTEVHGRLKSTNCVVDSRMVVKITDFGCNSILAPKKDLWTAPEHLRRASVSQKGDVYSYGIIAQEIILRRETFYTLSCRDQKEKIFRVENSNGVKPFRPDLFLETAEEKELEVYLLVKNCWEEDPEKRPDFKKIENTLAKIFGLFHDQKNESYMDTLIRRLQLYSRNLEHLVEERTQLYKAERDRADRLNFMLLPRLVVKSLKEKGIVEPELYEEVTIYFSDIVGFTTICKYSTPMEVVDMLNDIYKSFDHILDHHDVYKVETIGDAYMVASGLPKRNGNRHAIDIAKMALDILSFMGTFELEHLPGLPIWIRIGIHSGPCAAGVVGIKMPRYCLFGDTVNTASRMESTGLPLRIHVSGSTIAILKRTECQFLYEVRGETYLKGRGTETTYWLTGVKDQEYNLPTPPTAENQQRLQAEFVDMIASSLQKRQASGIKNRKPTRVASYKKGTLEYLQLNTTDNESTHF.

Positions 1 to 23 (MKTPLLALALWSLLLQLGLTFWP) are cleaved as a signal peptide. Residues 24-433 (SSVSQNCHNG…IPGRGPQILM (410 aa)) are Extracellular-facing. N-linked (GlcNAc...) asparagine glycans are attached at residues N32, N43, N79, N195, N284, N307, and N402. The helical transmembrane segment at 434-454 (IAVFTLTGTIVLLLLIALLVL) threads the bilayer. Topologically, residues 455-1073 (RKYKREYALR…NTTDNESTHF (619 aa)) are cytoplasmic. In terms of domain architecture, Protein kinase spans 489–749 (LKIDDDRRRD…KIENTLAKIF (261 aa)). The Guanylate cyclase domain maps to 824–954 (TIYFSDIVGF…DTVNTASRME (131 aa)).

It belongs to the adenylyl cyclase class-4/guanylyl cyclase family. In terms of assembly, homotrimer. Interacts via its C-terminal region with NHERF4. Interacts with the lectin chaperone VIP36. Post-translationally, glycosylation at Asn-79 is required for interaction with VIP36 while glycosylation at Asn-402 modulates ligand-mediated GC-C activation.

It localises to the cell membrane. It is found in the endoplasmic reticulum membrane. The catalysed reaction is GTP = 3',5'-cyclic GMP + diphosphate. Guanylyl cyclase that catalyzes synthesis of cyclic GMP (cGMP) from GTP. The chain is Guanylyl cyclase C (GUCY2C) from Sus scrofa (Pig).